Reading from the N-terminus, the 227-residue chain is Albumin-2 (227 aa).

4 Hemopexin repeats span residues 3–46 (PGYI…GPTP), 61–111 (SYGI…FPFF), 117–165 (ESGI…YPCF), and 171–221 (ESGA…WPSL). Positions 7 and 65 each coordinate Ca(2+). Ser118 contacts spermine. Ca(2+) is bound by residues Asp121 and Asp175.

Monomer and homodimer. Dimers are prevalent in solution.

Its subcellular location is the cytoplasm. It is found in the cytosol. Functionally, may play a role in response to oxidative stress and polyamine biosynthesis. The monomeric form binds one hemin per monomer. In the dimeric form, about half of the dimers bind one molecule of spermine each under physiological conditions. Ligand binding is mutually exclusive as binding of hemin leads to dissociation of the dimer. This chain is Albumin-2, found in Lathyrus sativus (White vetchling).